The chain runs to 204 residues: MSIMSYTGGTVVAMAGDECVCIASDLRIGEQMTTIATDQKKVHKVTDKVYVGLAGFQSDARTVLEKIMFRKNLYELRENRNIKPQVLSEMISNLAYQHRFGSYFTEPLVAGLDDTNKPYICCMDTIGCVSAPRDFVAVGTGQEYLLGVCENFWRENMKPDELFEATAQSILSCLERDAASGWGAVVYTITKDKVNVSTIKARMD.

The protein belongs to the peptidase T1B family. In terms of assembly, the 26S proteasome consists of a 20S proteasome core and two 19S regulatory subunits. The 20S proteasome core is composed of 28 subunits that are arranged in four stacked rings, resulting in a barrel-shaped structure. The two end rings are each formed by seven alpha subunits, and the two central rings are each formed by seven beta subunits. The catalytic chamber with the active sites is on the inside of the barrel.

It is found in the cytoplasm. It localises to the nucleus. In terms of biological role, non-catalytic component of the proteasome, a multicatalytic proteinase complex which is characterized by its ability to cleave peptides with Arg, Phe, Tyr, Leu, and Glu adjacent to the leaving group at neutral or slightly basic pH. The proteasome has an ATP-dependent proteolytic activity. This is Proteasome subunit beta type-3 (pbs-3) from Caenorhabditis elegans.